A 389-amino-acid polypeptide reads, in one-letter code: PqqA peptide cyclase (389 aa).

A Radical SAM core domain is found at V19 to A234. [4Fe-4S] cluster-binding residues include C33, C37, and C40.

Belongs to the radical SAM superfamily. PqqE family. As to quaternary structure, interacts with PqqD. The interaction is necessary for activity of PqqE. [4Fe-4S] cluster serves as cofactor.

It catalyses the reaction [PQQ precursor protein] + S-adenosyl-L-methionine = E-Y cross-linked-[PQQ precursor protein] + 5'-deoxyadenosine + L-methionine + H(+). It functions in the pathway cofactor biosynthesis; pyrroloquinoline quinone biosynthesis. Functionally, catalyzes the cross-linking of a glutamate residue and a tyrosine residue in the PqqA protein as part of the biosynthesis of pyrroloquinoline quinone (PQQ). In Pseudomonas syringae pv. tomato (strain ATCC BAA-871 / DC3000), this protein is PqqA peptide cyclase.